Here is a 720-residue protein sequence, read N- to C-terminus: Protein-glutamine gamma-glutamyltransferase 5 (720 aa).

The residue at position 2 (alanine 2) is an N-acetylalanine. Active-site residues include cysteine 278, histidine 337, and aspartate 360. Asparagine 400, aspartate 402, glutamate 448, and glutamate 453 together coordinate Ca(2+). A disordered region spans residues 470–499 (HGSQRGAELQPSRPTSLSQDSPRSLHTPSL). The span at 481–496 (SRPTSLSQDSPRSLHT) shows a compositional bias: polar residues.

This sequence belongs to the transglutaminase superfamily. Transglutaminase family. It depends on Ca(2+) as a cofactor. As to expression, expressed in foreskin keratinocytes.

Its subcellular location is the cytoplasm. It catalyses the reaction L-glutaminyl-[protein] + L-lysyl-[protein] = [protein]-L-lysyl-N(6)-5-L-glutamyl-[protein] + NH4(+). In terms of biological role, catalyzes the cross-linking of proteins and the conjugation of polyamines to proteins. Contributes to the formation of the cornified cell envelope of keratinocytes. The chain is Protein-glutamine gamma-glutamyltransferase 5 (TGM5) from Homo sapiens (Human).